The primary structure comprises 802 residues: Leucine--tRNA ligase (802 aa).

The 'HIGH' region signature appears at 39-50 (PYPSGAGLHVGH). Residues 574–578 (KMSKS) carry the 'KMSKS' region motif. Lys-577 lines the ATP pocket.

The protein belongs to the class-I aminoacyl-tRNA synthetase family.

Its subcellular location is the cytoplasm. The enzyme catalyses tRNA(Leu) + L-leucine + ATP = L-leucyl-tRNA(Leu) + AMP + diphosphate. The polypeptide is Leucine--tRNA ligase (Macrococcus caseolyticus (strain JCSC5402) (Macrococcoides caseolyticum)).